We begin with the raw amino-acid sequence, 289 residues long: (3R)-3-[(carboxymethyl)amino]fatty acid oxygenase/decarboxylase (289 aa).

A (3R)-3-[(carboxymethyl)amino]fatty acid-binding residues include tyrosine 65, tyrosine 70, and glycine 93. Positions 97 and 99 each coordinate Fe(2+). Residues tyrosine 100 and lysine 158 each contribute to the a (3R)-3-[(carboxymethyl)amino]fatty acid site. Histidine 260 serves as a coordination point for Fe(2+). Histidine 264 is a 2-oxoglutarate binding site. An a (3R)-3-[(carboxymethyl)amino]fatty acid-binding site is contributed by arginine 275.

It belongs to the TfdA dioxygenase family. It depends on Fe(2+) as a cofactor.

The catalysed reaction is a (3R)-3-[(carboxymethyl)amino]fatty acid + 2 2-oxoglutarate + 2 O2 = a (3R)-3-isocyanyl-fatty acid + 2 succinate + 3 CO2 + 2 H2O. It catalyses the reaction a (3R)-3-[(carboxymethyl)amino]fatty acid + 2-oxoglutarate + O2 = a (3R)-3-{[carboxy(hydroxy)methyl]amino}fatty acid + succinate + CO2. It carries out the reaction a (3R)-3-{[carboxy(hydroxy)methyl]amino}fatty acid + 2-oxoglutarate + O2 = a (3R)-3-isocyanyl-fatty acid + succinate + 2 CO2 + 2 H2O. Functionally, involved in the biosynthesis of a unique class of isonitrile lipopeptides (INLPs) that seem to play a role in metal acquisition. Catalyzes the conversion of (3R)-3-[(carboxymethyl)amino]fatty acids to (3R)-3-isocyanyl-fatty acids through an oxidative decarboxylation mechanism, thereby generating the isonitrile group of INLPs. The protein is (3R)-3-[(carboxymethyl)amino]fatty acid oxygenase/decarboxylase of Mycobacterium bovis (strain ATCC BAA-935 / AF2122/97).